Here is a 460-residue protein sequence, read N- to C-terminus: Equilibrative nucleoside transporter 1 (460 aa).

The Cytoplasmic portion of the chain corresponds to 1 to 12 (MTTSHQPQDRYK). A helical membrane pass occupies residues 13–29 (AVWLIFFVLGLGTLLPW). The Extracellular portion of the chain corresponds to 30-82 (NFFMTATKYFTNRLDVSQNVSSDTDQSCESTKALADPTVALPARSSLSAIFNN). Asn-48 is a glycosylation site (N-linked (GlcNAc...) asparagine). A helical transmembrane segment spans residues 83 to 107 (VMTLCAMLPLLVFTCLNSFLHQRIS). Residues 108–111 (QSVR) are Cytoplasmic-facing. A helical transmembrane segment spans residues 112 to 130 (ILGSLLAILLVFLVTAALV). At 131 to 138 (KVEMDALI) the chain is on the extracellular side. A helical membrane pass occupies residues 139–157 (FFVITMIKIVLINSFGAIL). Topologically, residues 158-174 (QASLFGLAGVLPANYTA) are cytoplasmic. The helical transmembrane segment at 175–199 (PIMSGQGLAGFFTSVAMICAIASGS) threads the bilayer. Over 200 to 206 (ELSESAF) the chain is Extracellular. Residues 207-227 (GYFITACAVVILAILCYLALP) traverse the membrane as a helical segment. The Cytoplasmic segment spans residues 228–291 (RTEFYRHYLQ…IKAILKSICV (64 aa)). Residue Ser-254 is modified to Phosphoserine. The span at 255-266 (KGEEPKGRREES) shows a compositional bias: basic and acidic residues. The tract at residues 255-277 (KGEEPKGRREESGVPGPNSPPTN) is disordered. Position 273 is a phosphoserine (Ser-273). A helical transmembrane segment spans residues 292–311 (PALSVCFIFTVTIGLFPAVT). Topologically, residues 312–323 (AEVESSIAGTSP) are extracellular. The chain crosses the membrane as a helical span at residues 324-342 (WKSYFIPVACFLNFNVFDW). The Cytoplasmic portion of the chain corresponds to 343-359 (LGRSLTAVCMWPGQDSR). Residues 360 to 378 (WLPVLVASRIVFIPLLMLC) form a helical membrane-spanning segment. Over 379–397 (NVKARHCGAQRHHFVFKHD) the chain is Extracellular. Residues 398 to 417 (AWFIAFMAAFAFSNGYLASL) form a helical membrane-spanning segment. Topologically, residues 418 to 435 (CMCFGPKKVKPAEAETAG) are cytoplasmic. The chain crosses the membrane as a helical span at residues 436 to 456 (NIMSFFLCLGLALGAVLSFLL). The Extracellular portion of the chain corresponds to 457 to 460 (RALV).

Belongs to the SLC29A/ENT transporter (TC 2.A.57) family. In terms of assembly, identified in a complex with STOM. Glycosylated. As to expression, highly expressed in heart, spleen, lung, liver and testis. Lower level of expression in brain and kidney. Expressed in adipose tissues, brown adipocytes expressing significantly higher amounts than white adipocytes. Expressed in seminiferous tubules.

The protein resides in the basolateral cell membrane. Its subcellular location is the apical cell membrane. It localises to the cell membrane. It carries out the reaction adenosine(in) = adenosine(out). It catalyses the reaction guanosine(in) = guanosine(out). The enzyme catalyses inosine(in) = inosine(out). The catalysed reaction is uridine(out) = uridine(in). It carries out the reaction thymidine(in) = thymidine(out). It catalyses the reaction cytidine(in) = cytidine(out). The enzyme catalyses adenine(out) = adenine(in). The catalysed reaction is guanine(out) = guanine(in). It carries out the reaction thymine(out) = thymine(in). It catalyses the reaction uracil(in) = uracil(out). The enzyme catalyses hypoxanthine(out) = hypoxanthine(in). With respect to regulation, transporter activity is sensitive to low concentrations of the inhibitor nitrobenzylmercaptopurine riboside (NBMPR). In terms of biological role, uniporter involved in the facilitative transport of nucleosides and nucleobases, and contributes to maintaining their cellular homeostasis. Functions as a Na(+)-independent transporter. Involved in the transport of nucleosides such as adenosine, guanosine, inosine, uridine, thymidine and cytidine. Also transports purine (hypoxanthine, adenine, guanine) and pyrimidine nucleobases (thymine, uracil). Mediates basolateral nucleoside uptake into Sertoli cells, thereby regulating the transport of nucleosides in testis across the blood-testis-barrier. Regulates inosine levels in brown adipocytes tissues (BAT) and extracellular inosine levels, which controls BAT-dependent energy expenditure. The protein is Equilibrative nucleoside transporter 1 of Mus musculus (Mouse).